Reading from the N-terminus, the 447-residue chain is Succinate--CoA ligase [ADP-forming] subunit beta, mitochondrial (447 aa).

The transit peptide at 1 to 34 directs the protein to the mitochondrion; it reads MFKLGRNRALASAFAATSRAPLASRLPSVSQQQR. Residues 45-287 form the ATP-grasp domain; the sequence is ADLLRQYGIG…TTQEDPDEVR (243 aa). ATP is bound by residues Lys-82, 89–91, and Glu-150; that span reads GRG. 2 residues coordinate Mg(2+): Asn-242 and Asp-256. Substrate contacts are provided by residues Asn-307 and 364-366; that span reads GIV.

The protein belongs to the succinate/malate CoA ligase beta subunit family. Heterodimer of an alpha and a beta subunit. Mg(2+) is required as a cofactor.

Its subcellular location is the mitochondrion. The enzyme catalyses succinate + ATP + CoA = succinyl-CoA + ADP + phosphate. The protein operates within carbohydrate metabolism; tricarboxylic acid cycle; succinate from succinyl-CoA (ligase route): step 1/1. Its function is as follows. Succinyl-CoA synthetase functions in the citric acid cycle (TCA), coupling the hydrolysis of succinyl-CoA to the synthesis of ATP and thus represents the only step of substrate-level phosphorylation in the TCA. The beta subunit provides nucleotide specificity of the enzyme and binds the substrate succinate, while the binding sites for coenzyme A and phosphate are found in the alpha subunit. The sequence is that of Succinate--CoA ligase [ADP-forming] subunit beta, mitochondrial from Neurospora crassa (strain ATCC 24698 / 74-OR23-1A / CBS 708.71 / DSM 1257 / FGSC 987).